The chain runs to 662 residues: DNA topoisomerase 4 subunit B (662 aa).

Residues Tyr-20, Asn-60, Asp-87, 129–135 (GLHGVGI), and Lys-359 each bind ATP. Residues 439–553 (TELFIVEGDS…EGHLYLAKPP (115 aa)) form the Toprim domain. Mg(2+) contacts are provided by Glu-445, Asp-518, and Asp-520.

This sequence belongs to the type II topoisomerase family. ParE type 1 subfamily. Heterotetramer composed of ParC and ParE. Mg(2+) serves as cofactor. Mn(2+) is required as a cofactor. Requires Ca(2+) as cofactor.

The enzyme catalyses ATP-dependent breakage, passage and rejoining of double-stranded DNA.. Topoisomerase IV is essential for chromosome segregation. It relaxes supercoiled DNA. Performs the decatenation events required during the replication of a circular DNA molecule. The protein is DNA topoisomerase 4 subunit B of Rickettsia prowazekii (strain Madrid E).